Consider the following 78-residue polypeptide: Small ribosomal subunit protein bS18 (78 aa).

Belongs to the bacterial ribosomal protein bS18 family. In terms of assembly, part of the 30S ribosomal subunit. Forms a tight heterodimer with protein bS6.

In terms of biological role, binds as a heterodimer with protein bS6 to the central domain of the 16S rRNA, where it helps stabilize the platform of the 30S subunit. The sequence is that of Small ribosomal subunit protein bS18 from Lactobacillus acidophilus (strain ATCC 700396 / NCK56 / N2 / NCFM).